Consider the following 596-residue polypeptide: Endoribonuclease ZC3H12A (596 aa).

2 disordered regions span residues Met-1–Leu-48 and Gln-97–Asp-134. The segment covering Val-10–Leu-19 has biased composition (polar residues). The tract at residues Glu-42–Lys-87 is ubiquitin association domain. The segment at Val-81 to Gly-150 is necessary for interaction with TANK. Positions Gly-112–Leu-281 are RNase. The RNase NYN domain occupies Leu-135–Asn-290. Residues Arg-214–Arg-220 form an RNA binding region. Asp-226 lines the Mg(2+) pocket. Disordered regions lie at residues Asp-278 to Cys-306 and Asn-340 to Trp-417. The C3H1-type zinc finger occupies His-301–Glu-324. Residues His-301–Ser-454 are necessary for interaction with ZC3H12D. Ser-344 bears the Phosphoserine mark. Low complexity predominate over residues Gln-356–Ser-368. Phosphoserine occurs at positions 435 and 439. The tract at residues Tyr-511 to Val-543 is disordered. Low complexity predominate over residues Val-524–Pro-533.

It belongs to the ZC3H12 family. Oligomer. Found in a deubiquitination complex with TANK, USP10 and ZC3H12A; this complex inhibits genotoxic stress- or interleukin-1-beta-mediated NF-kappaB activation by promoting IKBKG or TRAF6 deubiquitination. Interacts with IKBKG; this interaction increases in response to DNA damage. Interacts with TANK; this interaction increases in response to DNA damage and serves as a bridge to anchor both TANK and USP10 into a deubiquitinating complex. Interacts with TRAF6; this interaction increases in response to DNA damage and is stimulated by TANK. Interacts with USP10; this interaction increases in response to DNA damage and serves as a bridge to anchor both TANK and USP10 into a deubiquitinating complex. Interacts with ZC3H12D. Interacts with TNRC6A. Interacts with IKBKB/IKKB. Interacts with IKBKB/IKKB. Interacts with IKBKB/IKKB. Interacts with BTRC; the interaction occurs when ZC3H12A is phosphorylated in a IKBKB/IKKB-dependent manner. Interacts with IRAK1; this interaction increases the interaction between ZC3H12A and IKBKB/IKKB. Interacts with UPF1; this interaction occurs in a mRNA translationally active- and termination-dependent manner and is essential for ZC3H12A-mediated degradation of target mRNAs. Associates with ribosomes. Interacts with ubiquitin. Mg(2+) serves as cofactor. In terms of processing, proteolytically cleaved between Arg-111 and Arg-214 by MALT1 in activated T-cells; cleavage at Arg-111 is critical for promoting ZC3H12A degradation in response to T-cell receptor (TCR) stimulation, and hence is necessary for prolonging the stability of a set of mRNAs controlling T-cell activation and Th17 cell differentiation. Phosphorylated by IRAK1; phosphorylation is necessary for subsequent phosphorylation by the I-kappa-B-kinase (IKK) complex. Phosphorylated by I-kappa-B-kinases (IKKs) at Ser-435 and Ser-439 upon lipopolysaccharide (LPS) or IL1B stimulation in macrophages through the MyD88-dependent signaling pathway; these phosphorylations promote rapid ubiquitin proteasome-mediated degradation of ZC3H12A in macrophages and hence allows its target mRNAs, such as IL6, to escape from degradation and accumulate during the inflammatory response. Post-translationally, ubiquitinated; ubiquitination is induced in response to interleukin IL1 receptor stimuli in a IKBKB/IKKB and IRAK1-dependent manner, leading to proteasome-mediated degradation. In terms of tissue distribution, expressed in CD4(+) helper T-cells (at protein level). Highly expressed in macrophages. Expressed in lung, lymph nodes, spleen and thymus. Expressed weakly in heart. Expressed weakly in cardiomyocytes (at protein level). Expressed in spleen, lung, intestine, brown adipose tissue and thymus. Weakly expressed in the heart. Weakly expressed in cardiomyocytes.

It is found in the nucleus. The protein localises to the cytoplasm. The protein resides in the rough endoplasmic reticulum membrane. It localises to the cytoplasmic granule. Its subcellular location is the P-body. In terms of biological role, endoribonuclease involved in various biological functions such as cellular inflammatory response and immune homeostasis, glial differentiation of neuroprogenitor cells, cell death of cardiomyocytes, adipogenesis and angiogenesis. Functions as an endoribonuclease involved in mRNA decay. Modulates the inflammatory response by promoting the degradation of a set of translationally active cytokine-induced inflammation-related mRNAs, such as IL6 and IL12B, during the early phase of inflammation. Prevents aberrant T-cell-mediated immune reaction by degradation of multiple mRNAs controlling T-cell activation, such as those encoding cytokines (IL6 and IL2), cell surface receptors (ICOS, TNFRSF4 and TNFR2) and transcription factor (REL). Inhibits cooperatively with ZC3H12A the differentiation of helper T cells Th17 in lungs. They repress target mRNA encoding the Th17 cell-promoting factors IL6, ICOS, REL, IRF4, NFKBID and NFKBIZ. The cooperation requires RNA-binding by RC3H1 and the nuclease activity of ZC3H12A. Together with RC3H1, destabilizes TNFRSF4/OX40 mRNA by binding to the conserved stem loop structure in its 3'UTR. Self regulates by destabilizing its own mRNA. Cleaves mRNA harboring a stem-loop (SL), often located in their 3'-UTRs, during the early phase of inflammation in a helicase UPF1-dependent manner. Plays a role in the inhibition of microRNAs (miRNAs) biogenesis. Cleaves the terminal loop of a set of precursor miRNAs (pre-miRNAs) important for the regulation of the inflammatory response leading to their degradation, and thus preventing the biosynthesis of mature miRNAs. Also plays a role in promoting angiogenesis in response to inflammatory cytokines by inhibiting the production of antiangiogenic microRNAs via its anti-dicer RNase activity. Affects the overall ubiquitination of cellular proteins. Positively regulates deubiquitinase activity promoting the cleavage at 'Lys-48'- and 'Lys-63'-linked polyubiquitin chains on TNF receptor-associated factors (TRAFs), preventing JNK and NF-kappa-B signaling pathway activation, and hence negatively regulating macrophage-mediated inflammatory response and immune homeostasis. Induces also deubiquitination of the transcription factor HIF1A, probably leading to its stabilization and nuclear import, thereby positively regulating the expression of proangiogenic HIF1A-targeted genes. Involved in a TANK-dependent negative feedback response to attenuate NF-kappaB activation through the deubiquitination of IKBKG or TRAF6 in response to interleukin-1-beta (IL1B) stimulation or upon DNA damage. Prevents stress granules (SGs) formation and promotes macrophage apoptosis under stress conditions, including arsenite-induced oxidative stress, heat shock, and energy deprivation. Plays a role in the regulation of macrophage polarization; promotes IL4-induced polarization of macrophages M1 into anti-inflammatory M2 state. May also act as a transcription factor that regulates the expression of multiple genes involved in inflammatory response, angiogenesis, adipogenesis and apoptosis. Functions as a positive regulator of glial differentiation of neuroprogenitor cells through an amyloid precursor protein (APP)-dependent signaling pathway. Attenuates septic myocardial contractile dysfunction in response to lipopolysaccharide (LPS) by reducing I-kappa-B-kinase (IKK)-mediated NF-kappa-B activation, and hence myocardial pro-inflammatory cytokine production. The polypeptide is Endoribonuclease ZC3H12A (Mus musculus (Mouse)).